The following is a 345-amino-acid chain: MSVIVPIHGPAIAPAPAPERVGVLLVNLGTPDSCDTKGVRIYLREFLSDPRVIENQGLFWKLALNGIILNTRPARKAKDYQKIWNHEKNESPLKTITRAQAEKLSASLGDRGHLIVDWAMRYGNPSLRDRIEALVAKGCSRLLVVPLYPQYSAATSATVCDQAFRVLRELRAQPTLRVTPPYYRDSAYIDALATSIKSHLASLTFEPELIVASFHGMPQAYIDKGDPYQAQCVATVEALRERMGVADDKLLLTFQSRFGFDQWLQPYTDKTIEALARKGVRKLAVVMPGFSADCLETLEEIAQENAEIFMEHGGEEFTAIPCLNDSDAGVQVIRQLVLRELQGWL.

H215 and E296 together coordinate Fe cation.

It belongs to the ferrochelatase family.

It localises to the cytoplasm. The enzyme catalyses heme b + 2 H(+) = protoporphyrin IX + Fe(2+). Its pathway is porphyrin-containing compound metabolism; protoheme biosynthesis; protoheme from protoporphyrin-IX: step 1/1. Catalyzes the ferrous insertion into protoporphyrin IX. The sequence is that of Ferrochelatase from Rhodopseudomonas palustris (strain TIE-1).